Reading from the N-terminus, the 283-residue chain is Quinate/shikimate dehydrogenase (NAD(+)) (283 aa).

Positions 17, 69, 73, 94, and 110 each coordinate shikimate. Residues Ser17 to Thr19, Thr69, Lys73, Asn94, and Asp110 each bind L-quinate. Lys73 serves as the catalytic Proton acceptor. Residues Gly137 to Val138, Asp158, Arg163, Pro203 to Met206, Ala213, Val228, and Gly251 contribute to the NAD(+) site. Shikimate is bound at residue Gln258. Residue Gln258 coordinates L-quinate.

The protein belongs to the shikimate dehydrogenase family. As to quaternary structure, homodimer.

The enzyme catalyses L-quinate + NAD(+) = 3-dehydroquinate + NADH + H(+). It carries out the reaction shikimate + NAD(+) = 3-dehydroshikimate + NADH + H(+). The protein operates within metabolic intermediate biosynthesis; chorismate biosynthesis; chorismate from D-erythrose 4-phosphate and phosphoenolpyruvate: step 4/7. Its pathway is aromatic compound metabolism; 3,4-dihydroxybenzoate biosynthesis; 3-dehydroquinate from D-quinate (NAD(+) route). Involved in the biosynthesis of the chorismate, which leads to the biosynthesis of aromatic amino acids, and plays a key role in the quinate degradation pathway. Catalyzes the NAD(+)-dependent oxidation of both quinate and shikimate to 3-dehydroquinate and 3-dehydroshikimate, respectively. The protein is Quinate/shikimate dehydrogenase (NAD(+)) of Corynebacterium glutamicum (strain R).